The primary structure comprises 119 residues: Putative phosphoethanolamine transferase YjgX (119 aa).

The next 2 membrane-spanning stretches (helical) occupy residues 5-25 and 94-114; these read VFPV…VIFW and LLLS…TIPY.

It belongs to the phosphoethanolamine transferase family.

The protein localises to the cell inner membrane. The chain is Putative phosphoethanolamine transferase YjgX (yjgX) from Escherichia coli (strain K12).